A 697-amino-acid polypeptide reads, in one-letter code: uncharacterized protein (697 aa).

The next 5 membrane-spanning stretches (helical) occupy residues 45-65, 86-106, 128-148, 198-218, and 280-300; these read LCAV…LALL, TVAA…MGVV, VVVS…GMLA, VLLG…WWAL, and HLAI…ILAG. ABC transporter domains are found at residues 251-473 and 477-696; these read VRLD…QPQH and LELV…AGGM. Residues 285–292 and 514–521 contribute to the ATP site; these read GANGSGKT and GGNGSGKS. The helical transmembrane segment at 522–542 threads the bilayer; sequence TLAWIMAGLTIPTTGACLLDG.

Belongs to the ABC transporter superfamily.

It localises to the cell membrane. This is an uncharacterized protein from Mycobacterium tuberculosis (strain CDC 1551 / Oshkosh).